An 875-amino-acid chain; its full sequence is Neurotrypsin (875 aa).

An N-terminal signal peptide occupies residues 1 to 20 (MTLARFALALLFGVLPEVVG). Asn26 carries an N-linked (GlcNAc...) asparagine glycan. The segment at 51–72 (QRHRRTRPPPPLPRFPRPPRAL) is disordered. Residues 58-71 (PPPPLPRFPRPPRA) are compositionally biased toward pro residues. Positions 93-165 (CPAGEPWVSV…GKVDWGYCDC (73 aa)) constitute a Kringle domain. Intrachain disulfides connect Cys93–Cys165, Cys109–Cys149, Cys138–Cys163, Cys195–Cys259, Cys208–Cys269, Cys239–Cys249, Cys305–Cys369, Cys318–Cys379, Cys349–Cys359, Cys412–Cys475, Cys425–Cys485, Cys455–Cys465, Cys525–Cys589, Cys538–Cys599, Cys569–Cys579, Cys619–Cys750, Cys661–Cys677, Cys765–Cys831, Cys794–Cys808, and Cys821–Cys850. 4 consecutive SRCR domains span residues 170-271 (VRLR…MCSF), 280-381 (IRLV…SCTP), 387-487 (IRLA…ACYP), and 500-601 (VRLM…ICDY). The tract at residues 619–630 (CGLRLLHRRQKR) is zymogen activation region. Residues 631 to 874 (IIGGKNSLRG…FVPWIKSVTK (244 aa)) form the Peptidase S1 domain. The active-site Charge relay system is the His676. A glycan (N-linked (GlcNAc...) asparagine) is linked at Asn683. Residue Asp726 is the Charge relay system of the active site. The active-site Charge relay system is Ser825.

It belongs to the peptidase S1 family.

Its subcellular location is the secreted. Functionally, plays a role in neuronal plasticity and the proteolytic action may subserve structural reorganizations associated with learning and memory operations. In Saguinus labiatus (Red-chested mustached tamarin), this protein is Neurotrypsin (PRSS12).